The chain runs to 386 residues: Protein phosphatase methylesterase 1 (386 aa).

Positions 1 to 38 (MSALEKSMHLGRLPSRPPLPGSGGSQSGAKMRMGPGRK) are disordered. The residue at position 15 (S15) is a Phosphoserine. Residue R16 is modified to Asymmetric dimethylarginine; alternate. At R16 the chain carries Omega-N-methylarginine; alternate. Residue S42 is modified to Phosphoserine. Catalysis depends on residues S156 and D181. Over residues 254 to 265 (IIEEEEEDEEGS) the composition is skewed to acidic residues. The interval 254-280 (IIEEEEEDEEGSESISKRKKEDDMETK) is disordered. The span at 268–280 (ISKRKKEDDMETK) shows a compositional bias: basic and acidic residues. The active site involves H349.

It belongs to the AB hydrolase superfamily. In terms of assembly, binds PPP2CA and PPP2CB. Post-translationally, phosphorylated by SIK1 following increases in intracellular sodium, leading to dissociation from the protein phosphatase 2A (PP2A) complex and subsequent dephosphorylation of sodium/potassium-transporting ATPase ATP1A1.

The enzyme catalyses [phosphatase 2A protein]-C-terminal L-leucine methyl ester + H2O = [phosphatase 2A protein]-C-terminal L-leucine + methanol + H(+). Demethylates proteins that have been reversibly carboxymethylated. Demethylates PPP2CB (in vitro) and PPP2CA. Binding to PPP2CA displaces the manganese ion and inactivates the enzyme. The polypeptide is Protein phosphatase methylesterase 1 (PPME1) (Homo sapiens (Human)).